We begin with the raw amino-acid sequence, 471 residues long: ATP synthase subunit beta (471 aa).

156 to 163 is an ATP binding site; that stretch reads GGAGVGKT.

This sequence belongs to the ATPase alpha/beta chains family. In terms of assembly, F-type ATPases have 2 components, CF(1) - the catalytic core - and CF(0) - the membrane proton channel. CF(1) has five subunits: alpha(3), beta(3), gamma(1), delta(1), epsilon(1). CF(0) has three main subunits: a(1), b(2) and c(9-12). The alpha and beta chains form an alternating ring which encloses part of the gamma chain. CF(1) is attached to CF(0) by a central stalk formed by the gamma and epsilon chains, while a peripheral stalk is formed by the delta and b chains.

It is found in the cell membrane. The catalysed reaction is ATP + H2O + 4 H(+)(in) = ADP + phosphate + 5 H(+)(out). Its function is as follows. Produces ATP from ADP in the presence of a proton gradient across the membrane. The catalytic sites are hosted primarily by the beta subunits. The polypeptide is ATP synthase subunit beta (Macrococcus caseolyticus (strain JCSC5402) (Macrococcoides caseolyticum)).